The following is a 344-amino-acid chain: Phosphoribosylformylglycinamidine cyclo-ligase (344 aa).

The protein belongs to the AIR synthase family.

The protein resides in the cytoplasm. It catalyses the reaction 2-formamido-N(1)-(5-O-phospho-beta-D-ribosyl)acetamidine + ATP = 5-amino-1-(5-phospho-beta-D-ribosyl)imidazole + ADP + phosphate + H(+). It functions in the pathway purine metabolism; IMP biosynthesis via de novo pathway; 5-amino-1-(5-phospho-D-ribosyl)imidazole from N(2)-formyl-N(1)-(5-phospho-D-ribosyl)glycinamide: step 2/2. This is Phosphoribosylformylglycinamidine cyclo-ligase from Glaesserella parasuis serovar 5 (strain SH0165) (Haemophilus parasuis).